Reading from the N-terminus, the 156-residue chain is S-ribosylhomocysteine lyase (156 aa).

Residues His56, His60, and Cys123 each contribute to the Fe cation site.

Belongs to the LuxS family. In terms of assembly, homodimer. Fe cation is required as a cofactor.

It catalyses the reaction S-(5-deoxy-D-ribos-5-yl)-L-homocysteine = (S)-4,5-dihydroxypentane-2,3-dione + L-homocysteine. Functionally, involved in the synthesis of autoinducer 2 (AI-2) which is secreted by bacteria and is used to communicate both the cell density and the metabolic potential of the environment. The regulation of gene expression in response to changes in cell density is called quorum sensing. Catalyzes the transformation of S-ribosylhomocysteine (RHC) to homocysteine (HC) and 4,5-dihydroxy-2,3-pentadione (DPD). This Staphylococcus haemolyticus (strain JCSC1435) protein is S-ribosylhomocysteine lyase.